A 1130-amino-acid chain; its full sequence is Serine/threonine-protein kinase LATS1 (1130 aa).

A compositionally biased stretch (basic and acidic residues) spans 1 to 11; it reads MKRSEKPEGYR. The segment at 1–71 is disordered; sequence MKRSEKPEGY…PRQVRNPPKF (71 aa). Polar residues predominate over residues 19–30; the sequence is PASNYTVSSRQM. Over residues 46 to 64 the composition is skewed to basic and acidic residues; sequence DAAKAEHNMSKMSTEDPRQ. One can recognise a UBA domain in the interval 100–141; sequence EVNPQMLQDLQAAGFDEDMVIQALQKTNNRSIEAAIEFISKM. The segment at 149 to 276 is disordered; that stretch reads EQMAAAAARP…SWEPNSQTKR (128 aa). Residues 167–179 are compositionally biased toward polar residues; that stretch reads NVQQSVNRKQSWK. Residues 235-268 show a composition bias toward pro residues; it reads NPPPPPQVRSVTPPPPPRGQTPPPRGTTPPPPSW. T246 carries the phosphothreonine modification. S278 is subject to Phosphoserine. 4 disordered regions span residues 294–321, 365–405, 432–484, and 515–631; these read GAWQ…RGIS, AGTV…NGSI, NWPQ…PSAT, and THPS…ESRI. Positions 300–312 are enriched in pro residues; the sequence is YPPPPLNTSPMNP. The PPxY motif 1 signature appears at 373-376; that stretch reads PPPY. The span at 381 to 405 shows a compositional bias: polar residues; that stretch reads ANGQSPSALQTGGSAAPSSYTNGSI. Low complexity predominate over residues 434–447; that stretch reads PQSSSAPAQSSPSS. A compositionally biased stretch (polar residues) spans 454–482; it reads WQPNIPVRSNSFNNPLGNRASHSANSQPS. S464 is subject to Phosphoserine; by NUAK1 and NUAK2. Residues 526–655 are interaction with YAP1; sequence TVQPSPFPEG…HVENVLKSHQ (130 aa). Residues 556–559 carry the PPxY motif 2 motif; it reads PPPY. The span at 579–609 shows a compositional bias: basic and acidic residues; sequence PSKEDQPSLPKEDESEKSYENVDSGDKEKKQ. S613 is modified (phosphoserine). Basic and acidic residues predominate over residues 621 to 630; that stretch reads KKDEERRESR. A Phosphoserine modification is found at S674. A Protein kinase domain is found at 705-1010; that stretch reads FVKIKTLGIG…ADEIKAHPFF (306 aa). Residues 711–719 and K734 each bind ATP; that span reads LGIGAFGEV. The Proton acceptor role is filled by D828. S909 is subject to Phosphoserine; by STK3/MST2. Residues 1011-1090 form the AGC-kinase C-terminal domain; that stretch reads KTIDFSSDLR…RRFFDDNGYP (80 aa). Residue T1079 is modified to Phosphothreonine; by STK3/MST2. Positions 1104–1130 are disordered; that stretch reads SQGSEQQSDEDDQNTGSEIKNRDLVYV.

It belongs to the protein kinase superfamily. AGC Ser/Thr protein kinase family. In terms of assembly, complexes with CDK1 in early mitosis. LATS1-associated CDK1 has no mitotic cyclin partner and no apparent kinase activity. Binds phosphorylated ZYX, locating this protein to the mitotic spindle and suggesting a role for actin regulatory proteins during mitosis. Binds to and colocalizes with LIMK1 at the actomyosin contractile ring during cytokinesis. Interacts (via PPxY motif 2) with YAP1 (via WW domains). Interacts with MOB1A and MOB1B. Interacts with LIMD1, WTIP and AJUBA. Interacts with ESR1, DCAF1 and DCAF13; probably recruits DCAF1 and DCAF13 to ESR1 to promote ESR1 ubiquitination and ubiquitin-mediated proteasomal degradation. Interacts with STK3/MST2; this interaction is inhibited in the presence of DLG5. Interacts with SCRIB in the presence of DLG5. Interacts with WWTR1/TAZ. Interacts with WWC1, WWC2 and WWC3 (via their WW domains). Mg(2+) is required as a cofactor. Autophosphorylated and phosphorylated during M-phase of the cell cycle. Phosphorylated by STK3/MST2 at Ser-909 and Thr-1079, which results in its activation. Phosphorylated by MAP4Ks; in parallel to STK3/MST2 and resulting to its activation. Phosphorylation at Ser-464 by NUAK1 and NUAK2 leads to decreased protein level and is required to regulate cellular senescence and cellular ploidy. In terms of tissue distribution, expressed in all adult tissues examined except for lung and kidney.

The protein localises to the cytoplasm. It localises to the cytoskeleton. Its subcellular location is the microtubule organizing center. The protein resides in the centrosome. It is found in the spindle. The protein localises to the midbody. It localises to the spindle pole body. It carries out the reaction L-seryl-[protein] + ATP = O-phospho-L-seryl-[protein] + ADP + H(+). The catalysed reaction is L-threonyl-[protein] + ATP = O-phospho-L-threonyl-[protein] + ADP + H(+). Its function is as follows. Negative regulator of YAP1 in the Hippo signaling pathway that plays a pivotal role in organ size control and tumor suppression by restricting proliferation and promoting apoptosis. The core of this pathway is composed of a kinase cascade wherein STK3/MST2 and STK4/MST1, in complex with its regulatory protein SAV1, phosphorylates and activates LATS1/2 in complex with its regulatory protein MOB1, which in turn phosphorylates and inactivates YAP1 oncoprotein and WWTR1/TAZ. Phosphorylation of YAP1 by LATS1 inhibits its translocation into the nucleus to regulate cellular genes important for cell proliferation, cell death, and cell migration. Acts as a tumor suppressor which plays a critical role in maintenance of ploidy through its actions in both mitotic progression and the G1 tetraploidy checkpoint. Negatively regulates G2/M transition by down-regulating CDK1 kinase activity. Involved in the control of p53 expression. Affects cytokinesis by regulating actin polymerization through negative modulation of LIMK1. May also play a role in endocrine function. Plays a role in mammary gland epithelial cell differentiation, both through the Hippo signaling pathway and the intracellular estrogen receptor signaling pathway by promoting the degradation of ESR1. Acts as an activator of the NLRP3 inflammasome by mediating phosphorylation of 'Ser-265' of NLRP3 following NLRP3 palmitoylation, promoting NLRP3 activation by NEK7. The protein is Serine/threonine-protein kinase LATS1 of Homo sapiens (Human).